We begin with the raw amino-acid sequence, 268 residues long: Tryptophan synthase alpha chain (268 aa).

Residues Glu49 and Asp60 each act as proton acceptor in the active site.

It belongs to the TrpA family. As to quaternary structure, tetramer of two alpha and two beta chains.

It carries out the reaction (1S,2R)-1-C-(indol-3-yl)glycerol 3-phosphate + L-serine = D-glyceraldehyde 3-phosphate + L-tryptophan + H2O. The protein operates within amino-acid biosynthesis; L-tryptophan biosynthesis; L-tryptophan from chorismate: step 5/5. Functionally, the alpha subunit is responsible for the aldol cleavage of indoleglycerol phosphate to indole and glyceraldehyde 3-phosphate. The chain is Tryptophan synthase alpha chain from Haemophilus influenzae (strain PittGG).